Here is a 128-residue protein sequence, read N- to C-terminus: Regulator of ribonuclease activity B (128 aa).

Belongs to the RraB family. As to quaternary structure, interacts with the C-terminal region of Rne.

The protein localises to the cytoplasm. Globally modulates RNA abundance by binding to RNase E (Rne) and regulating its endonucleolytic activity. Can modulate Rne action in a substrate-dependent manner by altering the composition of the degradosome. The chain is Regulator of ribonuclease activity B from Idiomarina loihiensis (strain ATCC BAA-735 / DSM 15497 / L2-TR).